Reading from the N-terminus, the 413-residue chain is NPL4-like protein 2 (413 aa).

Serine 104 is modified (phosphoserine). Residues 131 to 272 (SVSFDRDAAN…ADVHFEAFQM (142 aa)) form the MPN domain.

Belongs to the NPL4 family.

Its pathway is protein degradation; proteasomal ubiquitin-dependent pathway. May be part of a complex that binds ubiquitinated proteins and that is necessary for the export of misfolded proteins from the ER to the cytoplasm, where they are degraded by the proteasome. This chain is NPL4-like protein 2, found in Arabidopsis thaliana (Mouse-ear cress).